Here is a 349-residue protein sequence, read N- to C-terminus: 1-acylglycerol-3-phosphate O-acyltransferase ABHD5 (349 aa).

Residue A2 is modified to N-acetylalanine. The AB hydrolase-1 domain occupies 77 to 184; the sequence is PLVLLHGFGG…LVEPWGFPER (108 aa). Position 122 is a phosphoserine (S122). The HXXXXD motif signature appears at 327–332; sequence HYVYAD.

This sequence belongs to the peptidase S33 family. ABHD4/ABHD5 subfamily. In terms of assembly, interacts with ADRP, PLIN and PNPLA2. Interacts with PLIN5; promotes interaction with PNPLA2.

The protein localises to the cytoplasm. It is found in the lipid droplet. The catalysed reaction is a 1-acyl-sn-glycero-3-phosphate + an acyl-CoA = a 1,2-diacyl-sn-glycero-3-phosphate + CoA. It catalyses the reaction 1-(9Z-octadecenoyl)-sn-glycero-3-phosphate + (9Z)-octadecenoyl-CoA = 1,2-di-(9Z-octadecenoyl)-sn-glycero-3-phosphate + CoA. It carries out the reaction 1-(9Z-octadecenoyl)-sn-glycero-3-phosphate + hexadecanoyl-CoA = 1-(9Z)-octadecenoyl-2-hexadecanoyl-sn-glycero-3-phosphate + CoA. The enzyme catalyses 1-(9Z-octadecenoyl)-sn-glycero-3-phosphate + octadecanoyl-CoA = 1-(9Z-octadecenoyl)-2-octadecanoyl-sn-glycero-3-phosphate + CoA. The catalysed reaction is 1-(9Z-octadecenoyl)-sn-glycero-3-phosphate + (5Z,8Z,11Z,14Z)-eicosatetraenoyl-CoA = 1-(9Z)-octadecenoyl-2-(5Z,8Z,11Z,14Z)-eicosatetraenoyl-sn-glycero-3-phosphate + CoA. It catalyses the reaction eicosanoyl-CoA + 1-(9Z-octadecenoyl)-sn-glycero-3-phosphate = 1-(9Z)-octadecenoyl-2-eicosanoyl-sn-glycero-3-phosphate + CoA. It carries out the reaction 1-hexadecanoyl-sn-glycero-3-phosphate + (9Z)-octadecenoyl-CoA = 1-hexadecanoyl-2-(9Z-octadecenoyl)-sn-glycero-3-phosphate + CoA. The enzyme catalyses 1-octadecanoyl-sn-glycero-3-phosphate + (9Z)-octadecenoyl-CoA = 1-octadecanoyl-2-(9Z-octadecenoyl)-sn-glycero-3-phosphate + CoA. The catalysed reaction is 1-(5Z,8Z,11Z,14Z-eicosatetraenoyl)-sn-glycero-3-phosphate + (9Z)-octadecenoyl-CoA = 1-(5Z,8Z,11Z,14Z)-eicosatetraenoyl-2-(9Z)-octadecenoyl-sn-glycero-3-phosphate + CoA. Its activity is regulated as follows. Acyltransferase activity is inhibited by detergents such as Triton X-100 and 3-[(3-cholamidopropyl)dimethylammonio]-1-propanesulfonate (CHAPS). Acyltransferase activity is inhibited by the presence of magnesium and calcium. In terms of biological role, coenzyme A-dependent lysophosphatidic acid acyltransferase that catalyzes the transfer of an acyl group on a lysophosphatidic acid. Functions preferentially with 1-oleoyl-lysophosphatidic acid followed by 1-palmitoyl-lysophosphatidic acid, 1-stearoyl-lysophosphatidic acid and 1-arachidonoyl-lysophosphatidic acid as lipid acceptor. Functions preferentially with arachidonoyl-CoA followed by oleoyl-CoA as acyl group donors. Functions in phosphatidic acid biosynthesis. May regulate the cellular storage of triacylglycerol through activation of the phospholipase PNPLA2. Involved in keratinocyte differentiation. Regulates lipid droplet fusion. In Pongo abelii (Sumatran orangutan), this protein is 1-acylglycerol-3-phosphate O-acyltransferase ABHD5.